A 536-amino-acid chain; its full sequence is Glucose-6-phosphate isomerase (536 aa).

The active-site Proton donor is the glutamate 345. Catalysis depends on residues histidine 376 and lysine 505.

Belongs to the GPI family.

The protein resides in the cytoplasm. It carries out the reaction alpha-D-glucose 6-phosphate = beta-D-fructose 6-phosphate. It participates in carbohydrate biosynthesis; gluconeogenesis. Its pathway is carbohydrate degradation; glycolysis; D-glyceraldehyde 3-phosphate and glycerone phosphate from D-glucose: step 2/4. Functionally, catalyzes the reversible isomerization of glucose-6-phosphate to fructose-6-phosphate. This chain is Glucose-6-phosphate isomerase, found in Ruegeria sp. (strain TM1040) (Silicibacter sp.).